Here is a 69-residue protein sequence, read N- to C-terminus: Conotoxin Eb6.1 (69 aa).

A signal peptide spans 1–17 (VLIIAVLFLTACQLTTA). A propeptide spanning residues 18 to 41 (ETYSRGRQKHRARRSTDKNSKWTR) is cleaved from the precursor. 3 cysteine pairs are disulfide-bonded: C43–C57, C50–C61, and C56–C68.

Belongs to the conotoxin O1 superfamily. As to expression, expressed by the venom duct.

It localises to the secreted. This chain is Conotoxin Eb6.1 (E1), found in Conus ebraeus (Hebrew cone).